Reading from the N-terminus, the 486-residue chain is Glutamate--tRNA ligase 2 (486 aa).

Positions 12-22 (PSPTGELHIGN) match the 'HIGH' region motif. Positions 252–256 (KLSKR) match the 'KMSKS' region motif. An ATP-binding site is contributed by Lys255.

The protein belongs to the class-I aminoacyl-tRNA synthetase family. Glutamate--tRNA ligase type 1 subfamily. Monomer.

Its subcellular location is the cytoplasm. It carries out the reaction tRNA(Glu) + L-glutamate + ATP = L-glutamyl-tRNA(Glu) + AMP + diphosphate. In terms of biological role, catalyzes the attachment of glutamate to tRNA(Glu) in a two-step reaction: glutamate is first activated by ATP to form Glu-AMP and then transferred to the acceptor end of tRNA(Glu). The sequence is that of Glutamate--tRNA ligase 2 from Syntrophus aciditrophicus (strain SB).